A 397-amino-acid polypeptide reads, in one-letter code: Dual-specificity RNA methyltransferase RlmN (397 aa).

The Proton acceptor role is filled by E120. The region spanning 126–369 (ETDRGTLCVS…VRTPRGRDIL (244 aa)) is the Radical SAM core domain. An intrachain disulfide couples C133 to C372. Positions 140, 144, and 147 each coordinate [4Fe-4S] cluster. S-adenosyl-L-methionine is bound by residues 198–199 (GE), S230, 252–254 (SLH), and N329. Catalysis depends on C372, which acts as the S-methylcysteine intermediate.

This sequence belongs to the radical SAM superfamily. RlmN family. It depends on [4Fe-4S] cluster as a cofactor.

The protein localises to the cytoplasm. The catalysed reaction is adenosine(2503) in 23S rRNA + 2 reduced [2Fe-2S]-[ferredoxin] + 2 S-adenosyl-L-methionine = 2-methyladenosine(2503) in 23S rRNA + 5'-deoxyadenosine + L-methionine + 2 oxidized [2Fe-2S]-[ferredoxin] + S-adenosyl-L-homocysteine. It carries out the reaction adenosine(37) in tRNA + 2 reduced [2Fe-2S]-[ferredoxin] + 2 S-adenosyl-L-methionine = 2-methyladenosine(37) in tRNA + 5'-deoxyadenosine + L-methionine + 2 oxidized [2Fe-2S]-[ferredoxin] + S-adenosyl-L-homocysteine. In terms of biological role, specifically methylates position 2 of adenine 2503 in 23S rRNA and position 2 of adenine 37 in tRNAs. m2A2503 modification seems to play a crucial role in the proofreading step occurring at the peptidyl transferase center and thus would serve to optimize ribosomal fidelity. This Nitrobacter winogradskyi (strain ATCC 25391 / DSM 10237 / CIP 104748 / NCIMB 11846 / Nb-255) protein is Dual-specificity RNA methyltransferase RlmN.